A 462-amino-acid polypeptide reads, in one-letter code: Receptor like protein 29 (462 aa).

The first 26 residues, 1-26 (MTMKRALPSPSSLLFFFLLITPLFLC), serve as a signal peptide directing secretion. Residues 27-441 (QENRVSASMP…SQASRYYRSC (415 aa)) are Extracellular-facing. Asn139 is a glycosylation site (N-linked (GlcNAc...) asparagine). 10 LRR repeats span residues 139–164 (NSSLQQLSLRSNPSLSGQIPPRISSL), 165–188 (KSLQILTLSQNRLTGDIPPAIFSL), 190–212 (SLVHLDLSYNKLTGKIPLQLGNL), 213–236 (NNLVGLDLSYNSLTGTIPPTISQL), 238–260 (MLQKLDLSSNSLFGRIPEGVEKL), 261–284 (RSLSFMALSNNKLKGAFPKGISNL), 286–308 (SLQYFIMDNNPMFVALPVELGFL), 309–331 (PKLQELQLENSGYSGVIPESYTK), 332–355 (LTNLSSLSLANNRLTGEIPSGFES), and 357–381 (PHVFHLNLSRNLLIGVVPFDSSFLR). 3 N-linked (GlcNAc...) asparagine glycosylation sites follow: Asn334, Asn363, and Asn416. A helical transmembrane segment spans residues 442–462 (FFANALFPFALFLGLHQRWVL).

The protein belongs to the RLP family.

The protein localises to the cell membrane. The sequence is that of Receptor like protein 29 from Arabidopsis thaliana (Mouse-ear cress).